The sequence spans 539 residues: CTP synthase (539 aa).

An amidoligase domain region spans residues 1-267 (MTKFIFVTGG…DDLVIKRLDL (267 aa)). Serine 13 provides a ligand contact to CTP. Serine 13 lines the UTP pocket. 14–19 (SLGKGI) is a binding site for ATP. Tyrosine 54 contacts L-glutamine. Aspartate 71 is an ATP binding site. Mg(2+) is bound by residues aspartate 71 and glutamate 141. CTP-binding positions include 148–150 (DIE), 188–193 (KTKPTQ), and lysine 224. Residues 188 to 193 (KTKPTQ) and lysine 224 contribute to the UTP site. 240 to 242 (RDA) lines the ATP pocket. The 243-residue stretch at 293–535 (TIGLVGKYVS…IEAANKYKEA (243 aa)) folds into the Glutamine amidotransferase type-1 domain. Glycine 355 contacts L-glutamine. The active-site Nucleophile; for glutamine hydrolysis is the cysteine 382. L-glutamine is bound by residues 383-386 (LGMQ), glutamate 406, and arginine 463. Active-site residues include histidine 508 and glutamate 510.

It belongs to the CTP synthase family. As to quaternary structure, homotetramer.

It catalyses the reaction UTP + L-glutamine + ATP + H2O = CTP + L-glutamate + ADP + phosphate + 2 H(+). The enzyme catalyses L-glutamine + H2O = L-glutamate + NH4(+). It carries out the reaction UTP + NH4(+) + ATP = CTP + ADP + phosphate + 2 H(+). Its pathway is pyrimidine metabolism; CTP biosynthesis via de novo pathway; CTP from UDP: step 2/2. Allosterically activated by GTP, when glutamine is the substrate; GTP has no effect on the reaction when ammonia is the substrate. The allosteric effector GTP functions by stabilizing the protein conformation that binds the tetrahedral intermediate(s) formed during glutamine hydrolysis. Inhibited by the product CTP, via allosteric rather than competitive inhibition. Its function is as follows. Catalyzes the ATP-dependent amination of UTP to CTP with either L-glutamine or ammonia as the source of nitrogen. Regulates intracellular CTP levels through interactions with the four ribonucleotide triphosphates. This chain is CTP synthase, found in Staphylococcus carnosus (strain TM300).